We begin with the raw amino-acid sequence, 404 residues long: 5-aminolevulinate synthase (404 aa).

Substrate contacts are provided by arginine 21 and serine 136. The pyridoxal 5'-phosphate site is built by serine 188, histidine 216, and threonine 244. Lysine 247 is a catalytic residue. Lysine 247 carries the N6-(pyridoxal phosphate)lysine modification. Pyridoxal 5'-phosphate is bound by residues threonine 276 and threonine 277. Threonine 362 lines the substrate pocket.

The protein belongs to the class-II pyridoxal-phosphate-dependent aminotransferase family. Homodimer. The cofactor is pyridoxal 5'-phosphate.

The enzyme catalyses succinyl-CoA + glycine + H(+) = 5-aminolevulinate + CO2 + CoA. It participates in porphyrin-containing compound metabolism; protoporphyrin-IX biosynthesis; 5-aminolevulinate from glycine: step 1/1. The chain is 5-aminolevulinate synthase (hemA) from Rhizobium meliloti (strain 1021) (Ensifer meliloti).